The primary structure comprises 353 residues: Photosystem II D2 protein (353 aa).

Position 2 is an N-acetylthreonine (T2). The residue at position 2 (T2) is a Phosphothreonine. A helical membrane pass occupies residues 41-61 (CAYFALGGWFTGTTFVTSWYT). H118 is a chlorophyll a binding site. The helical transmembrane segment at 125–141 (GFMLRQFELARSVQLRP) threads the bilayer. Pheophytin a-binding residues include Q130 and N143. Residues 153–166 (VFVSVFLIYPLGQS) traverse the membrane as a helical segment. A chlorophyll a-binding site is contributed by H198. The helical transmembrane segment at 208 to 228 (AALLCAIHGATVENTLFEDGD) threads the bilayer. Positions 215 and 262 each coordinate a plastoquinone. H215 provides a ligand contact to Fe cation. Position 269 (H269) interacts with Fe cation. Residues 279–295 (GLWMSALGVVGLALNLR) form a helical membrane-spanning segment.

The protein belongs to the reaction center PufL/M/PsbA/D family. PSII is composed of 1 copy each of membrane proteins PsbA, PsbB, PsbC, PsbD, PsbE, PsbF, PsbH, PsbI, PsbJ, PsbK, PsbL, PsbM, PsbT, PsbX, PsbY, PsbZ, Psb30/Ycf12, at least 3 peripheral proteins of the oxygen-evolving complex and a large number of cofactors. It forms dimeric complexes. The D1/D2 heterodimer binds P680, chlorophylls that are the primary electron donor of PSII, and subsequent electron acceptors. It shares a non-heme iron and each subunit binds pheophytin, quinone, additional chlorophylls, carotenoids and lipids. There is also a Cl(-1) ion associated with D1 and D2, which is required for oxygen evolution. The PSII complex binds additional chlorophylls, carotenoids and specific lipids. is required as a cofactor.

The protein localises to the plastid. The protein resides in the chloroplast thylakoid membrane. The enzyme catalyses 2 a plastoquinone + 4 hnu + 2 H2O = 2 a plastoquinol + O2. In terms of biological role, photosystem II (PSII) is a light-driven water:plastoquinone oxidoreductase that uses light energy to abstract electrons from H(2)O, generating O(2) and a proton gradient subsequently used for ATP formation. It consists of a core antenna complex that captures photons, and an electron transfer chain that converts photonic excitation into a charge separation. The D1/D2 (PsbA/PsbD) reaction center heterodimer binds P680, the primary electron donor of PSII as well as several subsequent electron acceptors. D2 is needed for assembly of a stable PSII complex. This chain is Photosystem II D2 protein, found in Citrus sinensis (Sweet orange).